The chain runs to 740 residues: D-ornithine 4,5-aminomutase subunit beta (740 aa).

Residues Glu81, Tyr160, His182, and 294–296 (RAQ) each bind substrate. Residues 602–739 (PLKIVAATVG…VKKRREMREG (138 aa)) form the B12-binding domain. Adenosylcob(III)alamin is bound by residues 614 to 616 (EHS) and His615. N6-(pyridoxal phosphate)lysine is present on Lys626. Residues 664 to 669 (STIISH), Thr700, and Ser720 each bind adenosylcob(III)alamin.

In terms of assembly, heterotetramer of 2 alpha (OraS) and 2 beta (OraE) subunits. Adenosylcob(III)alamin is required as a cofactor. The cofactor is pyridoxal 5'-phosphate.

It carries out the reaction D-ornithine = (2R,4S)-2,4-diaminopentanoate. Its activity is regulated as follows. Increased activity in the presence of dithiothreitol (DTT) in vitro. Inhibited by 1 mM potassium phosphate and potassium chloride. Inhibited by L-alpha-ornithine, D,L-alpha-lysine, L-beta-lysine (50%-60%), L-alpha-lysine (26%) and by delta-amino-n-valeric acid to a lesser extent. Significant decrease in activity is observed in the presence of 0.2 mM p-chloromercuribenzoate, N-ethylmaleimide and also by 2 mM iodoacetate to a lesser extent but not inhibited by arsenite. Functionally, component of a complex that catalyzes the reversible migration of the omega amino group of D-ornithine to C-4 to form (2R,4S)-2,4-diaminopentanoic acid. OraE may be the catalytic subunit. Active only on D-ornithine and 2,4-diaminopentanoic acid but not active on L-ornithine, L-beta-lysine, L-alpha-lysine or D-alpha-lysine. The chain is D-ornithine 4,5-aminomutase subunit beta (oraE) from Acetoanaerobium sticklandii (strain ATCC 12662 / DSM 519 / JCM 1433 / CCUG 9281 / NCIMB 10654 / HF) (Clostridium sticklandii).